Reading from the N-terminus, the 412-residue chain is MEEKALTPEQTQEVERQLEILKRGVVEIVPEEALREKIEKSVRTGKPLKVKLGMDPSAPDVHIGHTVVLHKLRQFQDLGHEVQMLIGDFTGRIGDPSGKSETRKQLTDEQVKANARTYVEQYGKILDMEKATLHYNSKWLSALNFEDVIKLASQMTVARMLERDDFEKRYKSGQPISIHEFFYPLMQGYDSVALESDIEIGGTDQKFNLLMGRMLQEAYGNDKQVAITMPLIEGLDGERKMSKSLNNYIGIDEAPNEIFGKAMSIPDELMVKYYELATDLSMDEVKAIAKGLEDGSVHPRDAKMKLGATLVRMYHGEKEAEEAVNYFKTVFQKRDLPTDIPEVKWDGESPVWIVDLLVTLDLLPSKGEARRMVQNGGVKLNGEKVEDVQLQVEIEDGLIVQVGKRKFKKLVR.

The 'HIGH' region motif lies at 56–65 (PSAPDVHIGH). The 'KMSKS' region signature appears at 240–244 (KMSKS). K243 is a binding site for ATP. An S4 RNA-binding domain is found at 351–412 (VWIVDLLVTL…GKRKFKKLVR (62 aa)).

The protein belongs to the class-I aminoacyl-tRNA synthetase family. TyrS type 2 subfamily. As to quaternary structure, homodimer.

The protein localises to the cytoplasm. The catalysed reaction is tRNA(Tyr) + L-tyrosine + ATP = L-tyrosyl-tRNA(Tyr) + AMP + diphosphate + H(+). Functionally, catalyzes the attachment of tyrosine to tRNA(Tyr) in a two-step reaction: tyrosine is first activated by ATP to form Tyr-AMP and then transferred to the acceptor end of tRNA(Tyr). In Halalkalibacterium halodurans (strain ATCC BAA-125 / DSM 18197 / FERM 7344 / JCM 9153 / C-125) (Bacillus halodurans), this protein is Tyrosine--tRNA ligase.